Here is a 502-residue protein sequence, read N- to C-terminus: Probable cytosol aminopeptidase (502 aa).

Mn(2+)-binding residues include Lys-265 and Asp-270. Lys-277 is a catalytic residue. Mn(2+) contacts are provided by Asp-288, Asp-347, and Glu-349. Residue Arg-351 is part of the active site.

It belongs to the peptidase M17 family. Mn(2+) serves as cofactor.

The protein resides in the cytoplasm. It catalyses the reaction Release of an N-terminal amino acid, Xaa-|-Yaa-, in which Xaa is preferably Leu, but may be other amino acids including Pro although not Arg or Lys, and Yaa may be Pro. Amino acid amides and methyl esters are also readily hydrolyzed, but rates on arylamides are exceedingly low.. It carries out the reaction Release of an N-terminal amino acid, preferentially leucine, but not glutamic or aspartic acids.. Its function is as follows. Presumably involved in the processing and regular turnover of intracellular proteins. Catalyzes the removal of unsubstituted N-terminal amino acids from various peptides. This chain is Probable cytosol aminopeptidase, found in Rickettsia bellii (strain OSU 85-389).